A 419-amino-acid chain; its full sequence is UPF0229 protein Tbd_1233 (419 aa).

The interval 85-108 (GDRIDRPAGEGGGGSGGSPDGEGM) is disordered. A compositionally biased stretch (gly residues) spans 93–104 (GEGGGGSGGSPD).

It belongs to the UPF0229 family.

This Thiobacillus denitrificans (strain ATCC 25259 / T1) protein is UPF0229 protein Tbd_1233.